A 241-amino-acid polypeptide reads, in one-letter code: Ribose-5-phosphate isomerase A (241 aa).

Substrate contacts are provided by residues 29 to 32, 84 to 87, and 97 to 100; these read TGTT, DGAD, and KGGG. The Proton acceptor role is filled by E106. Position 124 (K124) interacts with substrate.

The protein belongs to the ribose 5-phosphate isomerase family. Homodimer.

It carries out the reaction aldehydo-D-ribose 5-phosphate = D-ribulose 5-phosphate. It functions in the pathway carbohydrate degradation; pentose phosphate pathway; D-ribose 5-phosphate from D-ribulose 5-phosphate (non-oxidative stage): step 1/1. In terms of biological role, catalyzes the reversible conversion of ribose-5-phosphate to ribulose 5-phosphate. In Thermoplasma volcanium (strain ATCC 51530 / DSM 4299 / JCM 9571 / NBRC 15438 / GSS1), this protein is Ribose-5-phosphate isomerase A.